A 1241-amino-acid polypeptide reads, in one-letter code: MMENWPKKPEGSQWTDDQWKAVVATGRDILVAAAAGSGKTAVLVERIIKKIINEENPVDVDRLLVVTFTNAAAQEMKNRIGEALEKVLIDEPGSQHVRKQLSLLNKASISTIHSFCLQVIRGYYYMLDVDPRFRIANQTENELLKEEVLDDILEEEYGIEDNTIFFELVDRYTSDRSDDDLQRMILALHTESRAHPNPEKWLDKLVEAYDVEGKTIEDLVYASYLLEDVKFQLETAEQHIRKATELAMLPDGPAPRIETLQADLALLGTLSAAARESWTSVYEAMQNVSWQTLKRIKKSDYNEDIVKQVDSLRNKAKDEVKKLQEELFSRRPESFLRDFQDMHPVLEKLVQLVKVFTERFQAMKRDKGMVDFTDLEHFCLQILSEQSEDGEMKPSAVALQYRNKFAEVLVDEYQDTNFVQESIIKFVTKDSESEGNLFMVGDVKQSIYRFRLAEPGLFLGKYKRFTQEGLGGGMKIDLAKNFRSRHEVLAGTNFIFKQIMGEEVGEIDYDADAELKLGASYPEGEDVAAELLCIQQTEEEVIDGEEGAEVEKAQLEARLMAQRIKAMVDSGYEVYDRKTDSMRPVKYRDFVILLRSMPWAPQIMEELKLQGIPVYADLATGYFEATEVNIMMNVFRVIDNPMQDIPLAAVLRSPIVGLNDEELATLRAHGKKGSFYEVMSSFLKGAPLEEEKELHDKLEWFYNLLQGWREFARQQSLSDLIWKVYGETGYYDFVGGLPAGKQRQANLRVLYDRARQYEATSFRGLFRFLRFIERILERGDDMGTARALGEQEDVVRIMTIHKSKGLEFPVVFVAGLGRRFNTQDLMKRFLLHKDFGFGSQFIDPRKRIKYTTLSQLAIKRKMKMELIAEEMRVLYVALTRAKEKLILIGTVKDATKEMEKWLDAREHSEWLLPDHVRAGASCYLDWIAPSLYRHRDSEMLLELGQGSIPDEIYGYDTSWKVEVVDGNTLLAPEPVQEEKQELLEALREKKAVPLESERKEEVYDRLMWKYGYGEATSHRAKQSVTEIKRNYQSEEGSDNAFIKKLRAPIQTRPRFMEKKGLTYAERGTAVHAVMQHVDLKKPITVEILQEQIAGMVNKELLTFEQAEEIAIEKVISFFDSDLGKRVLAAKSVEREVPFTMMLAAEEAYQDWQGESGESILVQGVIDCMIEEEDGITLIDFKTDTIEGKFPGGFEQAKPILETRYKVQLSLYAKALEKSLQHPVKEKCLYFFDGNHVIKVEE.

The UvrD-like helicase ATP-binding domain maps to 12–485; that stretch reads SQWTDDQWKA…IDLAKNFRSR (474 aa). Residue 33 to 40 participates in ATP binding; that stretch reads AAAGSGKT. Residues 505-805 enclose the UvrD-like helicase C-terminal domain; it reads GEIDYDADAE…RIMTIHKSKG (301 aa).

It belongs to the helicase family. AddA subfamily. As to quaternary structure, heterodimer of AddA and AddB/RexB. Mg(2+) serves as cofactor.

It catalyses the reaction Couples ATP hydrolysis with the unwinding of duplex DNA by translocating in the 3'-5' direction.. It carries out the reaction ATP + H2O = ADP + phosphate + H(+). The heterodimer acts as both an ATP-dependent DNA helicase and an ATP-dependent, dual-direction single-stranded exonuclease. Recognizes the chi site generating a DNA molecule suitable for the initiation of homologous recombination. The AddA nuclease domain is required for chi fragment generation; this subunit has the helicase and 3' -&gt; 5' nuclease activities. The sequence is that of ATP-dependent helicase/nuclease subunit A from Bacillus anthracis.